Reading from the N-terminus, the 514-residue chain is ATP synthase subunit alpha (514 aa).

170-177 (GDRQIGKT) contributes to the ATP binding site.

The protein belongs to the ATPase alpha/beta chains family. F-type ATPases have 2 components, CF(1) - the catalytic core - and CF(0) - the membrane proton channel. CF(1) has five subunits: alpha(3), beta(3), gamma(1), delta(1), epsilon(1). CF(0) has three main subunits: a(1), b(2) and c(9-12). The alpha and beta chains form an alternating ring which encloses part of the gamma chain. CF(1) is attached to CF(0) by a central stalk formed by the gamma and epsilon chains, while a peripheral stalk is formed by the delta and b chains.

The protein localises to the cell inner membrane. The enzyme catalyses ATP + H2O + 4 H(+)(in) = ADP + phosphate + 5 H(+)(out). In terms of biological role, produces ATP from ADP in the presence of a proton gradient across the membrane. The alpha chain is a regulatory subunit. The sequence is that of ATP synthase subunit alpha from Pseudomonas putida (strain ATCC 700007 / DSM 6899 / JCM 31910 / BCRC 17059 / LMG 24140 / F1).